Consider the following 297-residue polypeptide: T-cell leukemia homeobox protein 1 (297 aa).

The interval 153–174 (DRFTGHPYQNRTPPKKKKPRTS) is disordered. The homeobox DNA-binding region spans 168–227 (KKKPRTSFTRLQICELEKRFHRQKYLASAERAALAKALKMTDAQVKTWFQNRRTKWRRQT).

The protein resides in the nucleus. Its function is as follows. Seems to be involved in the development of cranial sensory innervation from peripheral ganglia. The sequence is that of T-cell leukemia homeobox protein 1 (TLX1) from Gallus gallus (Chicken).